The primary structure comprises 211 residues: Protein-methionine-sulfoxide reductase heme-binding subunit MsrQ (211 aa).

A run of 4 helical transmembrane segments spans residues Leu17–Ala37, Leu82–Val102, Pro116–Thr136, and Phe153–Ser173.

It belongs to the MsrQ family. As to quaternary structure, heterodimer of a catalytic subunit (MsrP) and a heme-binding subunit (MsrQ). Requires FMN as cofactor. Heme b is required as a cofactor.

The protein localises to the cell inner membrane. In terms of biological role, part of the MsrPQ system that repairs oxidized periplasmic proteins containing methionine sulfoxide residues (Met-O), using respiratory chain electrons. Thus protects these proteins from oxidative-stress damage caused by reactive species of oxygen and chlorine generated by the host defense mechanisms. MsrPQ is essential for the maintenance of envelope integrity under bleach stress, rescuing a wide series of structurally unrelated periplasmic proteins from methionine oxidation, including the primary periplasmic chaperone SurA and the lipoprotein Pal. MsrQ provides electrons for reduction to the reductase catalytic subunit MsrP, using the quinone pool of the respiratory chain. This is Protein-methionine-sulfoxide reductase heme-binding subunit MsrQ from Shigella boydii serotype 18 (strain CDC 3083-94 / BS512).